We begin with the raw amino-acid sequence, 216 residues long: Holliday junction branch migration complex subunit RuvA (216 aa).

Residues 1–64 (MISFIKGVLI…EDAQQLYGFK (64 aa)) form a domain I region. The domain II stretch occupies residues 65-143 (SKVDKKVFQE…KMANEIYAQT (79 aa)). The flexible linker stretch occupies residues 144–163 (SGTTTTSQDSQAQQAPTSAV). The segment at 164–216 (LANSIFNESVDALLALGYKQKDAEKMSRSAMGDATTAAEVIRKALQGSIRSKR) is domain III.

This sequence belongs to the RuvA family. In terms of assembly, homotetramer. Forms an RuvA(8)-RuvB(12)-Holliday junction (HJ) complex. HJ DNA is sandwiched between 2 RuvA tetramers; dsDNA enters through RuvA and exits via RuvB. An RuvB hexamer assembles on each DNA strand where it exits the tetramer. Each RuvB hexamer is contacted by two RuvA subunits (via domain III) on 2 adjacent RuvB subunits; this complex drives branch migration. In the full resolvosome a probable DNA-RuvA(4)-RuvB(12)-RuvC(2) complex forms which resolves the HJ.

The protein resides in the cytoplasm. Functionally, the RuvA-RuvB-RuvC complex processes Holliday junction (HJ) DNA during genetic recombination and DNA repair, while the RuvA-RuvB complex plays an important role in the rescue of blocked DNA replication forks via replication fork reversal (RFR). RuvA specifically binds to HJ cruciform DNA, conferring on it an open structure. The RuvB hexamer acts as an ATP-dependent pump, pulling dsDNA into and through the RuvAB complex. HJ branch migration allows RuvC to scan DNA until it finds its consensus sequence, where it cleaves and resolves the cruciform DNA. The polypeptide is Holliday junction branch migration complex subunit RuvA (Francisella tularensis subsp. novicida (strain U112)).